The chain runs to 796 residues: Protein translocase subunit SecA 2 (796 aa).

Residues Q84, 102–106 (GEGKT), and D496 contribute to the ATP site.

It belongs to the SecA family. Monomer and homodimer. Part of the essential Sec protein translocation apparatus which comprises SecA, SecYEG and auxiliary proteins SecDF. Other proteins may also be involved.

Its subcellular location is the cell membrane. The protein resides in the cytoplasm. It carries out the reaction ATP + H2O + cellular proteinSide 1 = ADP + phosphate + cellular proteinSide 2.. Part of the Sec protein translocase complex. Interacts with the SecYEG preprotein conducting channel. Has a central role in coupling the hydrolysis of ATP to the transfer of proteins into and across the cell membrane, serving as an ATP-driven molecular motor driving the stepwise translocation of polypeptide chains across the membrane. This chain is Protein translocase subunit SecA 2, found in Staphylococcus epidermidis (strain ATCC 12228 / FDA PCI 1200).